Here is a 65-residue protein sequence, read N- to C-terminus: Large ribosomal subunit protein bL35 (65 aa).

Belongs to the bacterial ribosomal protein bL35 family.

The sequence is that of Large ribosomal subunit protein bL35 from Borrelia duttonii (strain Ly).